The following is a 978-amino-acid chain: MSSLDRKKPQNRSKNNYYNICLKEKGSEELTCEEHARIIFDGLYEFVGLLDAHGNVLEVNQVALEGGGITLEEIRGKPFWKARWWQISKKTEATQKRLVETASSGEFVRCDVEILGKSGGREVIAVDFSLLPICNEEGSIVYLLAEGRNITDKKKAEAMLALKNQELEQSVECIRKLDNAKSDFFAKVSHELRTPLSLILGPLEAVMAAEAGRESPYWKQFEVIQRNAMTLLKQVNTLLDLAKMDARQMGLSYRRANLSQLTRTISSNFEGIAQQKSITFDTKLPVQMVAEVDCEKYERIILNLLSNAFKFTPDGGLIRCCLSLSRPNYALVTVSDSGPGIPPALRKEIFERFHQLSQEGQQATRGTGLGLSIVKEFVELHRGTISVSDAPGGGALFQVKLPLNAPEGAYVASNTAPRRDNPQVVDTDEYLLLAPNAENEAEVLPFQSDQPRVLIVEDNPDMRGFIKDCLSSDYQVYVAPDGAKALELMSNMPPDLLITDLIMPVMSGDMLVHQVRKKNELSHIPIMVLSAKSDAELRVKLLSESVQDFLLKPFSAHELRARVSNLVSMKVAGDALRKELSDQGDDIAILTHRLIKSRHRLQQSNIALSASEARWKAVYENSAAGIVLTDPENRILNANPAFQRITGYGEKDLEGLSMEQLTPSDESPQIKQRLANLLQGGGAEYSVERSYLCKNGSTIWANASVSLMPQRVGESPVILQIIDDITEKKQAQENLNQLQQQLVYVSRSATMGEFAAYIAHEINQPLSAIMTNANAGTRWLGNEPSNIPEAKEALARIIRDSDRAAEIIRMVRSFLKRQETVLKPIDLKALVTDTSLILKAPSQNNSVNLDVVADDELPEIWGDGVQIQQLIINLAMNAIEAISQADCETRQLTLSFSGNDTGDALVISVKDTGPGISERQMAQLFNAFYTTKKEGLGMGLAICLTITEVHNGKIWVECPPAGGACFLVSIPARQGSGT.

In terms of domain architecture, PAS 1 spans 32–103 (CEEHARIIFD…TQKRLVETAS (72 aa)). The PAC 1 domain maps to 108 to 162 (VRCDVEILGKSGGREVIAVDFSLLPICNEEGSIVYLLAEGRNITDKKKAEAMLAL). Positions 187–405 (KVSHELRTPL…LFQVKLPLNA (219 aa)) constitute a Histidine kinase 1 domain. His-190 carries the phosphohistidine; by autocatalysis modification. The region spanning 452–567 (RVLIVEDNPD…ELRARVSNLV (116 aa)) is the Response regulatory domain. Asp-500 carries the 4-aspartylphosphate modification. One can recognise a PAS 2 domain in the interval 611 to 681 (SEARWKAVYE…QRLANLLQGG (71 aa)). Residues 685-737 (YSVERSYLCKNGSTIWANASVSLMPQRVGESPVILQIIDDITEKKQAQENLNQ) enclose the PAC 2 domain. The Histidine kinase 2 domain maps to 757 to 974 (YIAHEINQPL…CFLVSIPARQ (218 aa)). His-760 bears the Phosphohistidine mark.

As to quaternary structure, homodimer. Binds as a dimer to a pseudopalindromic sequence. Autophosphorylated. Activation requires a sequential transfer of a phosphate group from a His in the primary transmitter domain, to an Asp in the receiver domain and to a His in the secondary transmitter domain.

Its subcellular location is the cytoplasm. It catalyses the reaction ATP + protein L-histidine = ADP + protein N-phospho-L-histidine.. Its function is as follows. Member of the two-component regulatory system TodS/TodT involved in the regulation of toluene degradation. Phosphorylates TodT via a four-step phosphorelay in response to toluene. In Pseudomonas putida (strain ATCC 700007 / DSM 6899 / JCM 31910 / BCRC 17059 / LMG 24140 / F1), this protein is Sensor histidine kinase TodS (todS).